We begin with the raw amino-acid sequence, 75 residues long: Translational regulator CsrA (75 aa).

Belongs to the CsrA/RsmA family. Homodimer; the beta-strands of each monomer intercalate to form a hydrophobic core, while the alpha-helices form wings that extend away from the core.

The protein resides in the cytoplasm. In terms of biological role, a translational regulator that binds mRNA to regulate translation initiation and/or mRNA stability. Usually binds in the 5'-UTR at or near the Shine-Dalgarno sequence preventing ribosome-binding, thus repressing translation. Its main target seems to be the major flagellin gene, while its function is anatagonized by FliW. The polypeptide is Translational regulator CsrA (Exiguobacterium sibiricum (strain DSM 17290 / CCUG 55495 / CIP 109462 / JCM 13490 / 255-15)).